A 493-amino-acid chain; its full sequence is Glutamate--tRNA ligase (493 aa).

The 'HIGH' region signature appears at 10 to 20 (PSPTGDPHVGT). The 'KMSKS' region motif lies at 251-255 (KLSKR). Lys-254 contacts ATP.

The protein belongs to the class-I aminoacyl-tRNA synthetase family. Glutamate--tRNA ligase type 1 subfamily. Monomer.

The protein localises to the cytoplasm. The enzyme catalyses tRNA(Glu) + L-glutamate + ATP = L-glutamyl-tRNA(Glu) + AMP + diphosphate. Functionally, catalyzes the attachment of glutamate to tRNA(Glu) in a two-step reaction: glutamate is first activated by ATP to form Glu-AMP and then transferred to the acceptor end of tRNA(Glu). The polypeptide is Glutamate--tRNA ligase (Marinomonas sp. (strain MWYL1)).